Reading from the N-terminus, the 397-residue chain is MTVSPVVATDAPSTDATRTTATSATSPAVATDAGGVSISAFDGSRVRVVLMLDVHDGMQQEFLDAYERIRDRVAAVPGHVSDQLCQSLENPTQWLLTSEWESAAPFLAWVNSDEHLDTVEPLATCVRDTHSLRYSVLRETDGGRPAPGEPRSAPRIGDNVVRHALTFTVRPGTEAETARLLSEYVSPDAHVDGSTRLLRTSLFMSGNRIVRAVEVRGDLQTALRHVARQPGVRAVEEALNPYLEQDRDLGDPQSARRFFTRAAMPAVHHATYPDRSGARRERLALLYPVRDGAGPDLARLLARQDAAAARNPDGPVLAATVFHRDDLVVRLVDVDGDPEDAPAEVLGLHGRGAADAERLLDAAAVGVDGSPAEAATLSRLLRRIRMTPLTDRRSAGS.

Positions 1 to 22 (MTVSPVVATDAPSTDATRTTAT) are disordered. The segment covering 8–22 (ATDAPSTDATRTTAT) has biased composition (low complexity). Positions 46–137 (VRVVLMLDVH…DTHSLRYSVL (92 aa)) constitute an ABM domain.

Belongs to the SchA/CurD family.

This Streptomyces coelicolor (strain ATCC BAA-471 / A3(2) / M145) protein is 42.8 kDa protein in whiE locus.